The following is a 143-amino-acid chain: Insulin-like growth factor 1 (143 aa).

A signal peptide spans 1–32 (MITPTVKMRILSSSHLFYLALCLLTFTSSATA). Positions 33–61 (GPETLCGAELVDALQFVCGDRGFYFNKPT) are b. Cystine bridges form between Cys38-Cys80, Cys50-Cys93, and Cys79-Cys84. Residues 62-73 (GYGSSSRRAPQT) are c. Residues 74–94 (GIVDECCFRSCDLRRLEMYCA) are a. The interval 95-102 (PLKPAKAA) is d. Residues 99–143 (AKAARSVRAQRHTDMPKTQKYQPPSTNKKMKSQRRRKGSTFEEHK) form a disordered region. The propeptide at 103 to 143 (RSVRAQRHTDMPKTQKYQPPSTNKKMKSQRRRKGSTFEEHK) is e peptide. The segment covering 126–136 (KKMKSQRRRKG) has biased composition (basic residues).

It belongs to the insulin family. Forms a ternary complex with IGFR1 and ITGAV:ITGB3. Forms a ternary complex with IGFR1 and ITGA6:ITGB4. Forms a ternary complex with IGFBP3 and ALS.

The protein resides in the secreted. Its function is as follows. The insulin-like growth factors, isolated from plasma, are structurally and functionally related to insulin but have a much higher growth-promoting activity. May be a physiological regulator of [1-14C]-2-deoxy-D-glucose (2DG) transport and glycogen synthesis in osteoblasts. Stimulates glucose transport in bone-derived osteoblastic (PyMS) cells and is effective at much lower concentrations than insulin, not only regarding glycogen and DNA synthesis but also with regard to enhancing glucose uptake. May play a role in synapse maturation. Ca(2+)-dependent exocytosis of IGF1 is required for sensory perception of smell in the olfactory bulb. Acts as a ligand for IGF1R. Binds to the alpha subunit of IGF1R, leading to the activation of the intrinsic tyrosine kinase activity which autophosphorylates tyrosine residues in the beta subunit thus initiating a cascade of down-stream signaling events leading to activation of the PI3K-AKT/PKB and the Ras-MAPK pathways. Binds to integrins ITGAV:ITGB3 and ITGA6:ITGB4. Its binding to integrins and subsequent ternary complex formation with integrins and IGFR1 are essential for IGF1 signaling. Induces the phosphorylation and activation of IGFR1, MAPK3/ERK1, MAPK1/ERK2 and AKT1. As part of the MAPK/ERK signaling pathway, acts as a negative regulator of apoptosis in cardiomyocytes via promotion of STUB1/CHIP-mediated ubiquitination and degradation of ICER-type isoforms of CREM. The sequence is that of Insulin-like growth factor 1 from Oryctolagus cuniculus (Rabbit).